Consider the following 503-residue polypeptide: Lanosterol 14-alpha demethylase (503 aa).

Residues 24–44 (GNLLSTLLIACAFTLSLVYLF) form a helical membrane-spanning segment. Cys449 lines the heme pocket.

The protein belongs to the cytochrome P450 family. Requires heme as cofactor. Ubiquitinated by MARCHF6, leading to proteasomal degradation.

It localises to the endoplasmic reticulum membrane. The protein localises to the microsome membrane. The catalysed reaction is a 14alpha-methyl steroid + 3 reduced [NADPH--hemoprotein reductase] + 3 O2 = a Delta(14) steroid + formate + 3 oxidized [NADPH--hemoprotein reductase] + 4 H2O + 4 H(+). It carries out the reaction lanosterol + 3 reduced [NADPH--hemoprotein reductase] + 3 O2 = 4,4-dimethyl-5alpha-cholesta-8,14,24-trien-3beta-ol + formate + 3 oxidized [NADPH--hemoprotein reductase] + 4 H2O + 4 H(+). It catalyses the reaction 24,25-dihydrolanosterol + 3 reduced [NADPH--hemoprotein reductase] + 3 O2 = 4,4-dimethyl-8,14-cholestadien-3beta-ol + formate + 3 oxidized [NADPH--hemoprotein reductase] + 4 H2O + 4 H(+). The enzyme catalyses a 14alpha-methyl steroid + reduced [NADPH--hemoprotein reductase] + O2 = a 14alpha-hydroxymethyl steroid + oxidized [NADPH--hemoprotein reductase] + H2O + H(+). The catalysed reaction is a 14alpha-hydroxymethyl steroid + reduced [NADPH--hemoprotein reductase] + O2 = a 14alpha-formyl steroid + oxidized [NADPH--hemoprotein reductase] + 2 H2O + H(+). It carries out the reaction a 14alpha-formyl steroid + reduced [NADPH--hemoprotein reductase] + O2 = a Delta(14) steroid + formate + oxidized [NADPH--hemoprotein reductase] + H2O + 2 H(+). It catalyses the reaction lanosterol + reduced [NADPH--hemoprotein reductase] + O2 = 32-hydroxylanosterol + oxidized [NADPH--hemoprotein reductase] + H2O + H(+). The enzyme catalyses 32-hydroxylanosterol + reduced [NADPH--hemoprotein reductase] + O2 = 32-oxolanosterol + oxidized [NADPH--hemoprotein reductase] + 2 H2O + H(+). The catalysed reaction is 32-oxolanosterol + reduced [NADPH--hemoprotein reductase] + O2 = 4,4-dimethyl-5alpha-cholesta-8,14,24-trien-3beta-ol + formate + oxidized [NADPH--hemoprotein reductase] + H2O + 2 H(+). It carries out the reaction 24,25-dihydrolanosterol + reduced [NADPH--hemoprotein reductase] + O2 = 32-hydroxy-24,25-dihydrolanosterol + oxidized [NADPH--hemoprotein reductase] + H2O + H(+). It catalyses the reaction 32-hydroxy-24,25-dihydrolanosterol + reduced [NADPH--hemoprotein reductase] + O2 = 32-oxo-24,25-dihydrolanosterol + oxidized [NADPH--hemoprotein reductase] + 2 H2O + H(+). The enzyme catalyses 32-oxo-24,25-dihydrolanosterol + reduced [NADPH--hemoprotein reductase] + O2 = 4,4-dimethyl-8,14-cholestadien-3beta-ol + formate + oxidized [NADPH--hemoprotein reductase] + H2O + 2 H(+). It functions in the pathway steroid biosynthesis; zymosterol biosynthesis; zymosterol from lanosterol: step 1/6. With respect to regulation, inhibited by azalanstat. Inhibited by azole antifungal agents ketoconazole, itraconazole and fluconazole. Sterol 14alpha-demethylase that plays a critical role in the cholesterol biosynthesis pathway, being cholesterol the major sterol component in mammalian membranes as well as a precursor for bile acid and steroid hormone synthesis. Cytochrome P450 monooxygenase that catalyzes the three-step oxidative removal of the 14alpha-methyl group (C-32) of sterols such as lanosterol (lanosta-8,24-dien-3beta-ol) and 24,25-dihydrolanosterol (DHL) in the form of formate, and converts the sterols to 4,4-dimethyl-5alpha-cholesta-8,14,24-trien-3beta-ol and 4,4-dimethyl-8,14-cholestadien-3beta-ol, respectively, which are intermediates of cholesterol biosynthesis. Can also demethylate substrates not intrinsic to mammals, such as eburicol (24-methylene-24,25-dihydrolanosterol), but at a lower rate than DHL. The chain is Lanosterol 14-alpha demethylase from Mus musculus (Mouse).